The chain runs to 347 residues: NADH-ubiquinone oxidoreductase chain 2 (347 aa).

The next 11 membrane-spanning stretches (helical) occupy residues 3–23, 25–45, 66–86, 96–116, 122–142, 145–165, 178–198, 200–220, 237–257, 274–294, and 325–345; these read PIIF…VMIS, HWLR…PIMM, ASML…QWTV, MLMT…FWVP, IPLS…MSVL, ILPS…IMIG, IMAY…PYNP, MMLL…LLFM, MPIM…LPPL, NSII…YFYM, and LLPT…ILSI.

Belongs to the complex I subunit 2 family. Core subunit of respiratory chain NADH dehydrogenase (Complex I) which is composed of 45 different subunits. Interacts with TMEM242.

The protein localises to the mitochondrion inner membrane. The catalysed reaction is a ubiquinone + NADH + 5 H(+)(in) = a ubiquinol + NAD(+) + 4 H(+)(out). In terms of biological role, core subunit of the mitochondrial membrane respiratory chain NADH dehydrogenase (Complex I) which catalyzes electron transfer from NADH through the respiratory chain, using ubiquinone as an electron acceptor. Essential for the catalytic activity and assembly of complex I. This is NADH-ubiquinone oxidoreductase chain 2 from Capra hircus (Goat).